Here is a 213-residue protein sequence, read N- to C-terminus: Kynurenine formamidase (213 aa).

Trp15 serves as a coordination point for substrate. The Zn(2+) site is built by His45, His49, and Asp51. Catalysis depends on His55, which acts as the Proton donor/acceptor. Residues His157 and Glu169 each contribute to the Zn(2+) site.

Belongs to the Cyclase 1 superfamily. KynB family. Homodimer. The cofactor is Zn(2+).

It carries out the reaction N-formyl-L-kynurenine + H2O = L-kynurenine + formate + H(+). The protein operates within amino-acid degradation; L-tryptophan degradation via kynurenine pathway; L-kynurenine from L-tryptophan: step 2/2. Its function is as follows. Catalyzes the hydrolysis of N-formyl-L-kynurenine to L-kynurenine, the second step in the kynurenine pathway of tryptophan degradation. This chain is Kynurenine formamidase, found in Deinococcus geothermalis (strain DSM 11300 / CIP 105573 / AG-3a).